Consider the following 134-residue polypeptide: Phosphoribosyl-ATP pyrophosphatase (134 aa).

The protein belongs to the PRA-PH family.

The protein resides in the cytoplasm. The catalysed reaction is 1-(5-phospho-beta-D-ribosyl)-ATP + H2O = 1-(5-phospho-beta-D-ribosyl)-5'-AMP + diphosphate + H(+). Its pathway is amino-acid biosynthesis; L-histidine biosynthesis; L-histidine from 5-phospho-alpha-D-ribose 1-diphosphate: step 2/9. The chain is Phosphoribosyl-ATP pyrophosphatase from Verminephrobacter eiseniae (strain EF01-2).